Here is a 358-residue protein sequence, read N- to C-terminus: tRNA pseudouridine synthase D (358 aa).

The active-site Nucleophile is aspartate 84. The TRUD domain occupies glycine 161–aspartate 312.

It belongs to the pseudouridine synthase TruD family.

The enzyme catalyses uridine(13) in tRNA = pseudouridine(13) in tRNA. Functionally, responsible for synthesis of pseudouridine from uracil-13 in transfer RNAs. This chain is tRNA pseudouridine synthase D, found in Nitrosococcus oceani (strain ATCC 19707 / BCRC 17464 / JCM 30415 / NCIMB 11848 / C-107).